The following is a 192-amino-acid chain: RNA-free ribonuclease P (192 aa).

It belongs to the HARP family.

The enzyme catalyses Endonucleolytic cleavage of RNA, removing 5'-extranucleotides from tRNA precursor.. RNA-free RNase P that catalyzes the removal of the 5'-leader sequence from pre-tRNA to produce the mature 5'-terminus. The polypeptide is RNA-free ribonuclease P (Alkalilimnicola ehrlichii (strain ATCC BAA-1101 / DSM 17681 / MLHE-1)).